The following is a 650-amino-acid chain: Threonine--tRNA ligase (650 aa).

The TGS domain maps to 1–61; the sequence is MIKITFPDGA…DEDGTLEIVM (61 aa). Residues 242–540 are catalytic; it reads DHRKLGKELD…LIETYKGAFP (299 aa). Zn(2+) contacts are provided by C336, H387, and H517.

The protein belongs to the class-II aminoacyl-tRNA synthetase family. Homodimer. Requires Zn(2+) as cofactor.

It localises to the cytoplasm. It carries out the reaction tRNA(Thr) + L-threonine + ATP = L-threonyl-tRNA(Thr) + AMP + diphosphate + H(+). Catalyzes the attachment of threonine to tRNA(Thr) in a two-step reaction: L-threonine is first activated by ATP to form Thr-AMP and then transferred to the acceptor end of tRNA(Thr). Also edits incorrectly charged L-seryl-tRNA(Thr). The sequence is that of Threonine--tRNA ligase from Streptococcus suis (strain 98HAH33).